The following is a 581-amino-acid chain: MNIELINTNERFILINNGNKDKSLNIDKHSVKASISVGVPKNNEKVLTRIENVKGIIGCIQLVSGHYLMIFKEHNHVATVTGKKIYQMKDVELIPFFPNQQSLVSIPDQDAEEQHLSMIRWLLSSENFYFSYDYDFTLTLQRQYSTTTTTTSGSSLGERCDSRFFWNEKYVTILSKEHGLGDWILPITMGFVESKTLGGTCQFTLISRRNLNRSGTRYNVRGIDKKGNVANNVETEQIIEIKENTFTSFVQVRGSIPLLWSQFPTLKYKPSVKFYGDEKENSQALEQHFKQLHQLYGSTTVVNLIDRKGAELKLGEAYEERVKSLKDVHYVWFDFHSICKGMRYDKLSILMDQLKDDLKQYGFFFVEDGKIVQKQQGVFRTNCIDNLDRTNVVQSLITRHSLENQMASVLNKQIPSTTFKGDQFEYVFKNIWADHGDAISTQYSGTGALKNDFTRTGKRNFQGVLRDGENSVKRYYLNNFKDGFRQDSYFLFTNPSVDLTTAKQHESKPPSPLIWIFSFVFAAIFLANLYLPSATSSIGGFISQTTVLVGSVFFALKLAMKYQASIVDKPTLFKLDSIYKN.

The Cytoplasmic segment spans residues 1-511; sequence MNIELINTNE…AKQHESKPPS (511 aa). An SAC domain is found at 119–445; the sequence is IRWLLSSENF…GDAISTQYSG (327 aa). The helical transmembrane segment at 512–532 threads the bilayer; it reads PLIWIFSFVFAAIFLANLYLP. Residues 533 to 535 are Lumenal-facing; it reads SAT. The helical transmembrane segment at 536–556 threads the bilayer; it reads SSIGGFISQTTVLVGSVFFAL. The Cytoplasmic segment spans residues 557 to 581; sequence KLAMKYQASIVDKPTLFKLDSIYKN.

It is found in the endoplasmic reticulum membrane. It localises to the golgi apparatus membrane. The enzyme catalyses a 1,2-diacyl-sn-glycero-3-phospho-(1D-myo-inositol-3-phosphate) + H2O = a 1,2-diacyl-sn-glycero-3-phospho-(1D-myo-inositol) + phosphate. It catalyses the reaction a 1,2-diacyl-sn-glycero-3-phospho-(1D-myo-inositol 4-phosphate) + H2O = a 1,2-diacyl-sn-glycero-3-phospho-(1D-myo-inositol) + phosphate. Its function is as follows. Phosphoinositide phosphatase which catalyzes the hydrolysis of phosphatidylinositol 3-phosphate (PtdIns(3)P) and phosphatidylinositol 4-phosphate (PtdIns(4)P). Has low activity towards phosphatidylinositol-3,5-bisphosphate (PtdIns(3,5)P2). The protein is Phosphatidylinositol-3-phosphatase SAC1 (sac1) of Dictyostelium discoideum (Social amoeba).